The chain runs to 363 residues: MAP kinase kinase mkk-4 (363 aa).

Residues M1–E38 form a disordered region. The segment covering S14–S28 has biased composition (low complexity). Residues L66 to Y330 form the Protein kinase domain. Residues I72–V80 and K95 contribute to the ATP site. Catalysis depends on D194, which acts as the Proton acceptor.

Belongs to the protein kinase superfamily. STE Ser/Thr protein kinase family. MAP kinase kinase subfamily. As to expression, expressed in the pharynx, including the corpus, isthmus and terminal bulb.

The protein localises to the cytoplasm. The catalysed reaction is L-seryl-[protein] + ATP = O-phospho-L-seryl-[protein] + ADP + H(+). The enzyme catalyses L-threonyl-[protein] + ATP = O-phospho-L-threonyl-[protein] + ADP + H(+). It carries out the reaction L-tyrosyl-[protein] + ATP = O-phospho-L-tyrosyl-[protein] + ADP + H(+). Activity is required in presynaptic neurons, in a dose-dependent manner, for normal presynaptic development and morphology. Plays a role in the formation of muscle connections, also called muscle arm extensions, between the body wall and the motor axons in the dorsal and ventral cord. The protein is MAP kinase kinase mkk-4 (mkk-4) of Caenorhabditis elegans.